The sequence spans 563 residues: Zinc finger CCHC domain-containing protein 7 (563 aa).

Disordered stretches follow at residues 41-64 and 133-157; these read SQNL…VPGA and SHST…QNSS. Positions 133–142 are enriched in polar residues; that stretch reads SHSTPKVSAP. The segment covering 143–157 has biased composition (low complexity); the sequence is QSNNFKSQKSCQNSS. CCHC-type zinc fingers lie at residues 265-282, 287-304, 305-322, 328-345, and 372-389; these read VVCR…NCPV, PACC…SCPS, RYCL…ECIE, KTCH…ACPE, and VYCC…ECKE. Residues 443-494 are disordered; the sequence is KVDAKPPAKKRKKKHPSKKERKGTIRDYECAETKQKKKHKKRKSGLQEIEGD. A compositionally biased stretch (basic residues) spans 449-463; sequence PAKKRKKKHPSKKER. The span at 464-476 shows a compositional bias: basic and acidic residues; sequence KGTIRDYECAETK. Residues 477-486 show a composition bias toward basic residues; sequence QKKKHKKRKS.

As to quaternary structure, component of a nucleolar TRAMP-like complex, an ATP-dependent exosome regulatory complex consisting of a helicase (MTREX), an oligadenylate polymerase (PAPD5 or PAPD7), and a substrate specific RNA-binding factor (ZCCHC7 or ZCCHC8). Several TRAMP-like complexes exist with specific compositions and are associated with nuclear, or nucleolar RNA exosomes.

The protein localises to the nucleus. It is found in the nucleolus. The sequence is that of Zinc finger CCHC domain-containing protein 7 (zcchc7) from Xenopus laevis (African clawed frog).